A 495-amino-acid polypeptide reads, in one-letter code: N-succinylglutamate 5-semialdehyde dehydrogenase (495 aa).

228-233 (GSYATG) lines the NAD(+) pocket. Catalysis depends on residues glutamate 251 and cysteine 285.

It belongs to the aldehyde dehydrogenase family. AstD subfamily.

The enzyme catalyses N-succinyl-L-glutamate 5-semialdehyde + NAD(+) + H2O = N-succinyl-L-glutamate + NADH + 2 H(+). The protein operates within amino-acid degradation; L-arginine degradation via AST pathway; L-glutamate and succinate from L-arginine: step 4/5. Functionally, catalyzes the NAD-dependent reduction of succinylglutamate semialdehyde into succinylglutamate. This Legionella pneumophila (strain Corby) protein is N-succinylglutamate 5-semialdehyde dehydrogenase.